The following is a 303-amino-acid chain: Aspartate carbamoyltransferase catalytic subunit (303 aa).

Carbamoyl phosphate is bound by residues Arg51 and Thr52. An L-aspartate-binding site is contributed by Lys80. Positions 101, 129, and 132 each coordinate carbamoyl phosphate. The L-aspartate site is built by Arg162 and Arg221. Residues Leu260 and Pro261 each coordinate carbamoyl phosphate.

Belongs to the aspartate/ornithine carbamoyltransferase superfamily. ATCase family. As to quaternary structure, heterooligomer of catalytic and regulatory chains.

The catalysed reaction is carbamoyl phosphate + L-aspartate = N-carbamoyl-L-aspartate + phosphate + H(+). The protein operates within pyrimidine metabolism; UMP biosynthesis via de novo pathway; (S)-dihydroorotate from bicarbonate: step 2/3. Functionally, catalyzes the condensation of carbamoyl phosphate and aspartate to form carbamoyl aspartate and inorganic phosphate, the committed step in the de novo pyrimidine nucleotide biosynthesis pathway. The protein is Aspartate carbamoyltransferase catalytic subunit of Saccharolobus islandicus (strain M.16.4 / Kamchatka #3) (Sulfolobus islandicus).